The chain runs to 445 residues: Nuclear hormone receptor family member nhr-1 (445 aa).

Residues 19-55 (PMVNSQRNEDPSMYMNGSAASVSHTNGSSSMGNDQKF) are disordered. A compositionally biased stretch (polar residues) spans 36 to 51 (SAASVSHTNGSSSMGN). Residues 70-145 (GELCAVCSDL…VGMDAKALQI (76 aa)) constitute a DNA-binding region (nuclear receptor). 2 NR C4-type zinc fingers span residues 73–93 (CAVC…CNGC) and 109–133 (CQYN…FNKC). Positions 179-444 (QDQEIIDQLT…PFVKELCMKR (266 aa)) constitute an NR LBD domain.

It belongs to the nuclear hormone receptor family.

Its subcellular location is the nucleus. Orphan nuclear receptor which acts in concert with the insulin/IGF-1-like signaling (IIS) pathway during osmotic stress, perhaps in response to a ligand modified by the sulfotransferase ssu-1. This Caenorhabditis elegans protein is Nuclear hormone receptor family member nhr-1 (nhr-1).